We begin with the raw amino-acid sequence, 176 residues long: Flavodoxin 1 (176 aa).

A Flavodoxin-like domain is found at 4–165; the sequence is HGIFFGSDTG…RVEKWVKQIS (162 aa).

This sequence belongs to the flavodoxin family. FMN is required as a cofactor.

Functionally, low-potential electron donor to a number of redox enzymes. This is Flavodoxin 1 (fldA) from Shigella flexneri.